The following is a 79-amino-acid chain: Toxin 3FTx-Oxy5 (79 aa).

Positions 1–23 (MKTLLLTLVVMTIVCLDLGYTLT) are cleaved as a signal peptide. Intrachain disulfides connect Cys-24-Cys-41, Cys-34-Cys-59, Cys-63-Cys-71, and Cys-72-Cys-77.

This sequence belongs to the three-finger toxin family. Short-chain subfamily. As to expression, expressed by the venom gland.

It localises to the secreted. This Oxyuranus microlepidotus (Inland taipan) protein is Toxin 3FTx-Oxy5.